A 261-amino-acid polypeptide reads, in one-letter code: Cytochrome c oxidase subunit 3 (261 aa).

Over 1–15 (MTNQLHPFHMTNPSP) the chain is Mitochondrial matrix. A helical membrane pass occupies residues 16 to 34 (WPLTGATAALLMTSGLIMW). Residues 35–40 (FHYNSS) lie on the Mitochondrial intermembrane side of the membrane. A helical membrane pass occupies residues 41–66 (QLIMLGLLIMLLTLTQWWRDIVREST). Residues 67–72 (FQGHHT) are Mitochondrial matrix-facing. A helical transmembrane segment spans residues 73–105 (PSVQNNLRYGMILFITSEILFFTGFFWAFYHSS). Topologically, residues 106–128 (LSPTAELGNIWPPTGITPLNPFE) are mitochondrial intermembrane. Residues 129–152 (VPLLNTAVLLASGVTITWAHHSLM) traverse the membrane as a helical segment. Residues 153-155 (EGN) lie on the Mitochondrial matrix side of the membrane. The chain crosses the membrane as a helical span at residues 156–183 (RPQTLQALTLTIILGTYFTILQAMEYFE). Residues 184-190 (ASFTIAD) lie on the Mitochondrial intermembrane side of the membrane. Residues 191-223 (SIYGSTFFVATGFHGLHVIIGSTFLIVCLMRQL) traverse the membrane as a helical segment. Residues 224-232 (KYHFTSHHH) are Mitochondrial matrix-facing. The chain crosses the membrane as a helical span at residues 233–256 (FGFEAAAWYWHFVDVIWLFLYLSI). At 257–261 (YWWGS) the chain is on the mitochondrial intermembrane side.

Belongs to the cytochrome c oxidase subunit 3 family. In terms of assembly, component of the cytochrome c oxidase (complex IV, CIV), a multisubunit enzyme composed of 14 subunits. The complex is composed of a catalytic core of 3 subunits MT-CO1, MT-CO2 and MT-CO3, encoded in the mitochondrial DNA, and 11 supernumerary subunits COX4I, COX5A, COX5B, COX6A, COX6B, COX6C, COX7A, COX7B, COX7C, COX8 and NDUFA4, which are encoded in the nuclear genome. The complex exists as a monomer or a dimer and forms supercomplexes (SCs) in the inner mitochondrial membrane with NADH-ubiquinone oxidoreductase (complex I, CI) and ubiquinol-cytochrome c oxidoreductase (cytochrome b-c1 complex, complex III, CIII), resulting in different assemblies (supercomplex SCI(1)III(2)IV(1) and megacomplex MCI(2)III(2)IV(2)).

Its subcellular location is the mitochondrion inner membrane. It catalyses the reaction 4 Fe(II)-[cytochrome c] + O2 + 8 H(+)(in) = 4 Fe(III)-[cytochrome c] + 2 H2O + 4 H(+)(out). In terms of biological role, component of the cytochrome c oxidase, the last enzyme in the mitochondrial electron transport chain which drives oxidative phosphorylation. The respiratory chain contains 3 multisubunit complexes succinate dehydrogenase (complex II, CII), ubiquinol-cytochrome c oxidoreductase (cytochrome b-c1 complex, complex III, CIII) and cytochrome c oxidase (complex IV, CIV), that cooperate to transfer electrons derived from NADH and succinate to molecular oxygen, creating an electrochemical gradient over the inner membrane that drives transmembrane transport and the ATP synthase. Cytochrome c oxidase is the component of the respiratory chain that catalyzes the reduction of oxygen to water. Electrons originating from reduced cytochrome c in the intermembrane space (IMS) are transferred via the dinuclear copper A center (CU(A)) of subunit 2 and heme A of subunit 1 to the active site in subunit 1, a binuclear center (BNC) formed by heme A3 and copper B (CU(B)). The BNC reduces molecular oxygen to 2 water molecules using 4 electrons from cytochrome c in the IMS and 4 protons from the mitochondrial matrix. The sequence is that of Cytochrome c oxidase subunit 3 (MT-CO3) from Pelomedusa subrufa (African side-necked turtle).